The chain runs to 327 residues: Pumilio homolog 18 (327 aa).

Residues 1–324 (MAVADNPFSM…NIANILDSFR (324 aa)) enclose the PUM-HD domain. Pumilio repeat units follow at residues 79–114 (SDSD…FCAA), 115–149 (ILRR…ALYE), 150–185 (RILY…DQLL), 186–222 (ELVA…NIAV), 223–260 (NLYG…ELLG), and 261–295 (CDGD…DLFW).

Its subcellular location is the cytoplasm. Its function is as follows. Sequence-specific RNA-binding protein that regulates translation and mRNA stability by binding the 3'-UTR of target mRNAs. This is Pumilio homolog 18 (APUM18) from Arabidopsis thaliana (Mouse-ear cress).